Here is a 320-residue protein sequence, read N- to C-terminus: Glyoxylate/hydroxypyruvate reductase B (320 aa).

Catalysis depends on residues R233 and E262. The active-site Proton donor is the H281.

The protein belongs to the D-isomer specific 2-hydroxyacid dehydrogenase family. GhrB subfamily. Homodimer.

It localises to the cytoplasm. The catalysed reaction is glycolate + NADP(+) = glyoxylate + NADPH + H(+). The enzyme catalyses (R)-glycerate + NAD(+) = 3-hydroxypyruvate + NADH + H(+). It catalyses the reaction (R)-glycerate + NADP(+) = 3-hydroxypyruvate + NADPH + H(+). In terms of biological role, catalyzes the NADPH-dependent reduction of glyoxylate and hydroxypyruvate into glycolate and glycerate, respectively. This chain is Glyoxylate/hydroxypyruvate reductase B, found in Pectobacterium carotovorum subsp. carotovorum (strain PC1).